The sequence spans 344 residues: Meiotic recombination protein DMC1 homolog B (344 aa).

133–140 contacts ATP; it reads GEFRSGKT. Arg235 is a binding site for dsDNA. Residues Arg235, Phe238, Arg241, Arg247, and Arg315 each contribute to the ssDNA site. Positions 241 and 247 each coordinate dsDNA.

This sequence belongs to the RecA family. DMC1 subfamily. As to expression, highly expressed in spikelets. Expressed in meiotic young panicles.

It localises to the nucleus. Functionally, recombinase that may participate in meiotic recombination, specifically in homologous strand assimilation, which is required for the resolution of meiotic double-strand breaks. Exhibits DNA-dependent ATPase activity when bound to single-stranded DNA (ssDNA). Mediates renaturation of homologous complementary strands as well as assimilation of single strands into homologous supercoiled duplexes leading to D-loop formation. Binds circular single-stranded DNA (ssDNA) and circular double-stranded DNA (dsDNA) in vitro. Catalyzes DNA homologous renaturation and DNA strand exchange. The rates of these activities are dependent on the state of ATP hydrolysis. Forms helical filaments along ssDNA and dsDNA, and promotes strand exchange between ssDNA and dsDNA with long DNA substrates of several thousand base pairs. The presence of the replication protein A is not required for this activity. Seems to be required for homologous pairing and subsequent chromosome segregation during male meiosis. May be not directly required for homologous pairing during male meiosis. Required for synaptonemal complex assembly and crossover formation. Functions redundantly with DMC1A. The chain is Meiotic recombination protein DMC1 homolog B from Oryza sativa subsp. japonica (Rice).